A 377-amino-acid chain; its full sequence is MVAPGCSVPGLWVRGFGQCLGSLFTLFSKPLCSAAAAASQPLDAQRLAERLRAQKQQQKTKEPAPTNPVQRRVRELVRFTEQLQRVHPNVLAKALSRGIVHQDKELVVINKPYGLPVHGGPGVKLCISDVLPVLAKILHGPKAKPLHLCHRLDKETTGVMVLAWEKEVAHQVQELFRTRQVTKKYWAITVRVPVPEAGVVDIPIVEKEAQGQQHHHKMTLSPSYRMDDGKMVRVRSSRNAQLAVTQYQVLSSSLSAALLELQPITGIKHQLRVHMSFGLDCPILGDHKYSDWNRLAPQKLSAGILKKLGLQQSKARHLPLHLHACQLTLPALQPQKEELTLLCRPPRYFVNSLRRLGLKMPSRDHSADEEAAQPGAQ.

The segment at 51–70 (LRAQKQQQKTKEPAPTNPVQ) is disordered. Asp153 is a catalytic residue.

This sequence belongs to the pseudouridine synthase RluA family. As to quaternary structure, interacts with 16S mt-rRNA, mt-tRNA(Phe) and mt-tRNA(Met). Forms a regulatory protein-RNA complex, consisting of RCC1L, NGRN, RPUSD3, RPUSD4, TRUB2, FASTKD2 and 16S mt-rRNA.

The protein resides in the mitochondrion matrix. It is found in the nucleus. The protein localises to the cytoplasm. It carries out the reaction uridine in 5S rRNA = pseudouridine in 5S rRNA. It catalyses the reaction a uridine in tRNA = a pseudouridine in tRNA. The catalysed reaction is a uridine in mRNA = a pseudouridine in mRNA. Its function is as follows. Catalyzes uridine to pseudouridine isomerization (pseudouridylation) of different mitochondrial RNA substrates. Acts on position 1397 in 16S mitochondrial ribosomal RNA (16S mt-rRNA). This modification is required for the assembly of 16S mt-rRNA into a functional mitochondrial ribosome. As a component of a functional protein-RNA module, consisting of RCC1L, NGRN, RPUSD3, RPUSD4, TRUB2, FASTKD2 and 16S mt-rRNA, controls 16S mt-rRNA abundance and is required for intra-mitochondrial translation. Acts on position 39 in mitochondrial tRNA(Phe). Also catalyzes pseudouridylation of mRNAs in nucleus: acts as a regulator of pre-mRNA splicing by mediating pseudouridylation of pre-mRNAs at locations associated with alternatively spliced regions. Pseudouridylation of pre-mRNAs near splice sites directly regulates mRNA splicing and mRNA 3'-end processing. The protein is Pseudouridylate synthase RPUSD4, mitochondrial of Bos taurus (Bovine).